Here is a 683-residue protein sequence, read N- to C-terminus: MKTNIINTWHSFVNIPNVVVPAIEKEIRRMENGACSSFSDNDNGSLSEESENEDSLFRSNSYRRRGPSQREHYLPGTMALFNVNNSSNKDQDPKEKKKKKKEKKSKADDKKESKKDPEKKKKKEKEKEKKKEEKPKEKKEEEKKEVVVIDPSGNMYYNWLFCITLPVMYNWTMIIARACFDELQSDYLEYWLIFDYVSDVVYLADMFVRTRTGYLEQGLLVKDELKLIEKYKANLQFKLDVLSVIPTDLLYFKFGWNYPEIRLNRLLRISRMFEFFQRTETRTNYPNIFRISNLVMYIVIIIHWNACVYYSISKAIGFGNDTWVYPDVNDPEFGRLARKYVYSLYWSTLTLTTIGETPPPVLDSEYVFVVVDFLIGVLIFATIVGNIGSMISNMNAARAEFQSRVDAIKQYMNFRNVSKDMEKRVIKWFDYLWTNKKTVDEREVLRYLPDKLRAEIAINVHLDTLKKVRIFADCEAGLLVELVLKLQPQVYSPGDYICKKGDIGREMYIIKEGKLAVVADDGITQFVVLSDGSYFGEISILNIKGSKAGNRRTANIKSIGYSDLFCLSKDDLMEALTEYPDAKTMLEEKGRQILMKDGLLDINIANLGSDPKDLEEKVTRMEGSVDLLQTRFARILAEYESMQQKLKQRLTKVEKFLKPLIETEFSALEEPGGESEPTESLQG.

Residues 1–160 (MKTNIINTWH…PSGNMYYNWL (160 aa)) lie on the Cytoplasmic side of the membrane. Residues 34–144 (ACSSFSDNDN…PKEKKEEEKK (111 aa)) form a disordered region. A compositionally biased stretch (basic and acidic residues) spans 105–144 (SKADDKKESKKDPEKKKKKEKEKEKKKEEKPKEKKEEEKK). A helical membrane pass occupies residues 161–182 (FCITLPVMYNWTMIIARACFDE). Residues 183–192 (LQSDYLEYWL) lie on the Extracellular side of the membrane. A helical transmembrane segment spans residues 193–213 (IFDYVSDVVYLADMFVRTRTG). Topologically, residues 214–238 (YLEQGLLVKDELKLIEKYKANLQFK) are cytoplasmic. A helical transmembrane segment spans residues 239–257 (LDVLSVIPTDLLYFKFGWN). Over 258–262 (YPEIR) the chain is Extracellular. A helical membrane pass occupies residues 263-281 (LNRLLRISRMFEFFQRTET). The Cytoplasmic portion of the chain corresponds to 282–288 (RTNYPNI). The interval 286 to 394 (PNIFRISNLV…GNIGSMISNM (109 aa)) is ion conduction pathway. The chain crosses the membrane as a helical span at residues 289 to 312 (FRISNLVMYIVIIIHWNACVYYSI). Over 313 to 335 (SKAIGFGNDTWVYPDVNDPEFGR) the chain is Extracellular. Asparagine 320 carries N-linked (GlcNAc...) asparagine glycosylation. A run of 2 helical transmembrane segments spans residues 336–370 (LARKYVYSLYWSTLTLTTIGETPPPVLDSEYVFVV) and 371–395 (VDFLIGVLIFATIVGNIGSMISNMN). The selectivity filter stretch occupies residues 353 to 356 (TIGE). The tract at residues 396–472 (AARAEFQSRV…DTLKKVRIFA (77 aa)) is C-linker. The Cytoplasmic portion of the chain corresponds to 396–683 (AARAEFQSRV…ESEPTESLQG (288 aa)). The cyclic nucleotide-binding domain stretch occupies residues 476-596 (AGLLVELVLK…EEKGRQILMK (121 aa)). Positions 536, 539, 552, and 553 each coordinate 3',5'-cyclic GMP. 2 residues coordinate 3',5'-cyclic AMP: arginine 552 and threonine 553. The stretch at 614-668 (LEEKVTRMEGSVDLLQTRFARILAEYESMQQKLKQRLTKVEKFLKPLIETEFSAL) forms a coiled coil.

Belongs to the cyclic nucleotide-gated cation channel (TC 1.A.1.5) family. CNGA1 subfamily. As to quaternary structure, forms heterotetrameric channels composed of CNGA1 and CNGB1 subunits with 3:1 stoichiometry. May also form cyclic nucleotide-activated homotetrameric channels, that are efficiently activated by saturating cGMP, but poorly activated by saturating cAMP compared to the heterotetramer with CNGB1. The channel binds Ca(2+)-bound CALM1 via CaM1 and CaM2 regions of the CNGB1 subunit; this interaction modulates the affinity of the channel for cNMPs in response to intracellular Ca(2+) levels. As to expression, rod cells in the retina.

The protein localises to the cell membrane. It catalyses the reaction Ca(2+)(in) = Ca(2+)(out). It carries out the reaction Na(+)(in) = Na(+)(out). The catalysed reaction is K(+)(in) = K(+)(out). The enzyme catalyses NH4(+)(in) = NH4(+)(out). It catalyses the reaction Rb(+)(in) = Rb(+)(out). It carries out the reaction Li(+)(in) = Li(+)(out). The catalysed reaction is Cs(+)(in) = Cs(+)(out). Functionally, pore-forming subunit of the rod cyclic nucleotide-gated channel. Mediates rod photoresponses at dim light converting transient changes in intracellular cGMP levels into electrical signals. In the dark, cGMP levels are high and keep the channel open enabling a steady inward current carried by Na(+) and Ca(2+) ions that leads to membrane depolarization and neurotransmitter release from synaptic terminals. Upon photon absorption cGMP levels decline leading to channel closure and membrane hyperpolarization that ultimately slows neurotransmitter release and signals the presence of light, the end point of the phototransduction cascade. Conducts cGMP- and cAMP-gated ion currents, with permeability for monovalent and divalent cations. The selectivity for Ca(2+) over Na(+) increases with cGMP concentrations, whereas the selectivity among monovalent ions is independent of the cGMP levels. The protein is Cyclic nucleotide-gated channel alpha-1 of Rattus norvegicus (Rat).